A 454-amino-acid chain; its full sequence is Bifunctional protein GlmU (454 aa).

Residues 1-226 (MTTTVIILAA…AFEVEGVNDR (226 aa)) are pyrophosphorylase. Residues 8–11 (LAAG), K22, Q73, 78–79 (GT), 100–102 (YGD), G137, E151, N166, and N224 each bind UDP-N-acetyl-alpha-D-glucosamine. D102 serves as a coordination point for Mg(2+). Residue N224 participates in Mg(2+) binding. The tract at residues 227-247 (LQLAALEREFQLQQAKSLMQQ) is linker. Residues 248 to 454 (GVTLTDPSRF…NYQRPQKLKK (207 aa)) form an N-acetyltransferase region. UDP-N-acetyl-alpha-D-glucosamine is bound by residues R330 and K348. H360 (proton acceptor) is an active-site residue. The UDP-N-acetyl-alpha-D-glucosamine site is built by Y363 and N374. Acetyl-CoA contacts are provided by residues A377, 383 to 384 (NY), S402, A420, and R437.

It in the N-terminal section; belongs to the N-acetylglucosamine-1-phosphate uridyltransferase family. The protein in the C-terminal section; belongs to the transferase hexapeptide repeat family. As to quaternary structure, homotrimer. Requires Mg(2+) as cofactor.

It is found in the cytoplasm. The enzyme catalyses alpha-D-glucosamine 1-phosphate + acetyl-CoA = N-acetyl-alpha-D-glucosamine 1-phosphate + CoA + H(+). It carries out the reaction N-acetyl-alpha-D-glucosamine 1-phosphate + UTP + H(+) = UDP-N-acetyl-alpha-D-glucosamine + diphosphate. It functions in the pathway nucleotide-sugar biosynthesis; UDP-N-acetyl-alpha-D-glucosamine biosynthesis; N-acetyl-alpha-D-glucosamine 1-phosphate from alpha-D-glucosamine 6-phosphate (route II): step 2/2. It participates in nucleotide-sugar biosynthesis; UDP-N-acetyl-alpha-D-glucosamine biosynthesis; UDP-N-acetyl-alpha-D-glucosamine from N-acetyl-alpha-D-glucosamine 1-phosphate: step 1/1. The protein operates within bacterial outer membrane biogenesis; LPS lipid A biosynthesis. Its function is as follows. Catalyzes the last two sequential reactions in the de novo biosynthetic pathway for UDP-N-acetylglucosamine (UDP-GlcNAc). The C-terminal domain catalyzes the transfer of acetyl group from acetyl coenzyme A to glucosamine-1-phosphate (GlcN-1-P) to produce N-acetylglucosamine-1-phosphate (GlcNAc-1-P), which is converted into UDP-GlcNAc by the transfer of uridine 5-monophosphate (from uridine 5-triphosphate), a reaction catalyzed by the N-terminal domain. The protein is Bifunctional protein GlmU of Acinetobacter baylyi (strain ATCC 33305 / BD413 / ADP1).